The following is a 706-amino-acid chain: Protein psiG (706 aa).

Residues 1-23 (MKIILTLLIILFSLNKNLNFVSS) form the signal peptide. Topologically, residues 24 to 644 (EVTKSRICSI…FVCKPAAIIS (621 aa)) are extracellular. N-linked (GlcNAc...) asparagine glycosylation is found at Asn95, Asn107, Asn212, Asn296, Asn429, Asn521, Asn532, and Asn616. The PA14 domain occupies 109 to 253 (TLDKSSNIYS…SDYCGVCQGD (145 aa)). The chain crosses the membrane as a helical span at residues 645–665 (TSVIVGVSVAAAVVAIAIVVA). At 666–706 (SKKGYDAWAASNNNSLASLTSNPLYENPTGNGDNPMYQPNS) the chain is on the cytoplasmic side. Residues 687-706 (NPLYENPTGNGDNPMYQPNS) form a disordered region. A compositionally biased stretch (polar residues) spans 693–706 (PTGNGDNPMYQPNS).

Belongs to the prespore-cell-inducing factor family.

It localises to the membrane. In Dictyostelium discoideum (Social amoeba), this protein is Protein psiG (psiG-1).